Consider the following 360-residue polypeptide: Arginase, non-hepatic 1 (360 aa).

Mn(2+) contacts are provided by H122, D145, H147, and D149. Substrate-binding positions include 147–151 (HADIN), 158–160 (SGN), and D204. Mn(2+)-binding residues include D253 and D255. Residues T267 and E298 each coordinate substrate.

The protein belongs to the arginase family. As to quaternary structure, homotrimer. Requires Mn(2+) as cofactor. In terms of tissue distribution, expressed at differing tadpole stages in tail, intestine, hindlimb and trunk region. Most abundant in tadpole tail.

It carries out the reaction L-arginine + H2O = urea + L-ornithine. Its pathway is nitrogen metabolism; urea cycle; L-ornithine and urea from L-arginine: step 1/1. As well as its role in the urea cycle, may be involved in tissue remodeling. This chain is Arginase, non-hepatic 1 (arg2-a), found in Xenopus laevis (African clawed frog).